Reading from the N-terminus, the 108-residue chain is UPF0145 protein Ava_0420 (108 aa).

Belongs to the UPF0145 family.

The polypeptide is UPF0145 protein Ava_0420 (Trichormus variabilis (strain ATCC 29413 / PCC 7937) (Anabaena variabilis)).